We begin with the raw amino-acid sequence, 178 residues long: Peptide deformylase (178 aa).

The Fe cation site is built by Cys92 and His134. Glu135 is a catalytic residue. A Fe cation-binding site is contributed by His138.

It belongs to the polypeptide deformylase family. Fe(2+) is required as a cofactor.

It catalyses the reaction N-terminal N-formyl-L-methionyl-[peptide] + H2O = N-terminal L-methionyl-[peptide] + formate. In terms of biological role, removes the formyl group from the N-terminal Met of newly synthesized proteins. Requires at least a dipeptide for an efficient rate of reaction. N-terminal L-methionine is a prerequisite for activity but the enzyme has broad specificity at other positions. This chain is Peptide deformylase, found in Alkalilimnicola ehrlichii (strain ATCC BAA-1101 / DSM 17681 / MLHE-1).